The following is a 395-amino-acid chain: S-adenosylmethionine synthase (395 aa).

Histidine 14 is an ATP binding site. Aspartate 16 serves as a coordination point for Mg(2+). Glutamate 42 provides a ligand contact to K(+). L-methionine is bound by residues glutamate 55 and glutamine 98. The tract at residues 98 to 108 (QSPDIALGVDK) is flexible loop. ATP-binding positions include 174–176 (DGK), 240–241 (RF), aspartate 249, 255–256 (RK), alanine 272, and lysine 276. Aspartate 249 is an L-methionine binding site. Lysine 280 lines the L-methionine pocket.

It belongs to the AdoMet synthase family. Homotetramer; dimer of dimers. The cofactor is Mg(2+). Requires K(+) as cofactor.

The protein localises to the cytoplasm. It carries out the reaction L-methionine + ATP + H2O = S-adenosyl-L-methionine + phosphate + diphosphate. It functions in the pathway amino-acid biosynthesis; S-adenosyl-L-methionine biosynthesis; S-adenosyl-L-methionine from L-methionine: step 1/1. In terms of biological role, catalyzes the formation of S-adenosylmethionine (AdoMet) from methionine and ATP. The overall synthetic reaction is composed of two sequential steps, AdoMet formation and the subsequent tripolyphosphate hydrolysis which occurs prior to release of AdoMet from the enzyme. The sequence is that of S-adenosylmethionine synthase from Thermotoga neapolitana (strain ATCC 49049 / DSM 4359 / NBRC 107923 / NS-E).